A 660-amino-acid polypeptide reads, in one-letter code: Chaperone protein DnaK (660 aa).

T201 bears the Phosphothreonine; by autocatalysis mark. Residues 599 to 660 form a disordered region; sequence EAMQAQSASA…ADVEIVDKPE (62 aa). A compositionally biased stretch (low complexity) spans 600–617; the sequence is AMQAQSASAAASSAANAQ.

Belongs to the heat shock protein 70 family.

In terms of biological role, acts as a chaperone. The protein is Chaperone protein DnaK of Chlamydia trachomatis serovar A (strain ATCC VR-571B / DSM 19440 / HAR-13).